Consider the following 89-residue polypeptide: Small ribosomal subunit protein uS14A (89 aa).

This sequence belongs to the universal ribosomal protein uS14 family. As to quaternary structure, part of the 30S ribosomal subunit. Contacts proteins S3 and S10.

Its function is as follows. Binds 16S rRNA, required for the assembly of 30S particles and may also be responsible for determining the conformation of the 16S rRNA at the A site. This is Small ribosomal subunit protein uS14A from Staphylococcus aureus (strain Newman).